We begin with the raw amino-acid sequence, 216 residues long: Transmembrane emp24 domain-containing protein eca (216 aa).

A signal peptide spans 1–20; the sequence is MRDQFISLALILCVLHSACG. Residues 21-182 lie on the Lumenal side of the membrane; the sequence is LYFHISETER…FRHTSESTNS (162 aa). Positions 30–126 constitute a GOLD domain; that stretch reads RKCFIEEVPD…QLRVHLDIQV (97 aa). A coiled-coil region spans residues 134–164; sequence ANVAQKEKLTELQLRIRQLLDQVEQITKEQN. A helical membrane pass occupies residues 183-203; the sequence is RVLWWSLAQTIVLVCMGFWQM. The Cytoplasmic segment spans residues 204-216; the sequence is RHLKSFFEAKKLV. The Prevents secretion from ER motif lies at 213-216; the sequence is KKLV.

It belongs to the EMP24/GP25L family.

It is found in the endoplasmic reticulum membrane. Eca and bai are essential, though not redundant, for dorsoventral patterning of the embryo. Specifically required during early embryogenesis for the activity of maternal tkv, while the zygotic tkv is not affected. Involved in Golgi organization. The chain is Transmembrane emp24 domain-containing protein eca from Drosophila sechellia (Fruit fly).